Consider the following 395-residue polypeptide: Phosphoglycerate kinase (395 aa).

Residues 22-24 (DFN), R38, 61-64 (HLGR), R119, and R152 each bind substrate. ATP-binding positions include K203, G294, E325, and 351–354 (GGDT).

The protein belongs to the phosphoglycerate kinase family. Monomer.

It localises to the cytoplasm. The enzyme catalyses (2R)-3-phosphoglycerate + ATP = (2R)-3-phospho-glyceroyl phosphate + ADP. The protein operates within carbohydrate degradation; glycolysis; pyruvate from D-glyceraldehyde 3-phosphate: step 2/5. This Hydrogenobaculum sp. (strain Y04AAS1) protein is Phosphoglycerate kinase.